Here is a 608-residue protein sequence, read N- to C-terminus: Glutamine--fructose-6-phosphate aminotransferase [isomerizing] (608 aa).

The active-site Nucleophile; for GATase activity is the cysteine 2. The Glutamine amidotransferase type-2 domain occupies 2–217 (CGIVGYSGKK…DKEFVVLTSE (216 aa)). 2 SIS domains span residues 285–424 (TKEQ…NKNT) and 453–598 (KVQK…VDKP). The For Fru-6P isomerization activity role is filled by lysine 603.

In terms of assembly, homodimer.

Its subcellular location is the cytoplasm. It carries out the reaction D-fructose 6-phosphate + L-glutamine = D-glucosamine 6-phosphate + L-glutamate. In terms of biological role, catalyzes the first step in hexosamine metabolism, converting fructose-6P into glucosamine-6P using glutamine as a nitrogen source. This Clostridium acetobutylicum (strain ATCC 824 / DSM 792 / JCM 1419 / IAM 19013 / LMG 5710 / NBRC 13948 / NRRL B-527 / VKM B-1787 / 2291 / W) protein is Glutamine--fructose-6-phosphate aminotransferase [isomerizing].